A 982-amino-acid polypeptide reads, in one-letter code: MASSSSSSSSTNSSAVTGRLPGARSANPRKARILGLFDAIQDAVGPPKQAAADRRTVEKTWKLMDKVVRLCQNPKLQLKNSPPYILDILPDTYQHLRLILSKYDDNQKLAQLSENEYFKIYIDSLMKKSKRAIRLFKEGKERMYEEQSQERRNLTKLSLIFSHMLAEIKAIFPSGQFQGDNFRITKADAAEFWRKFFGERTIVPWKIFRQCLHEVHQISSGLEAMALKSTIDLTCNDYISVFEFDIFTRLFQPWTSILRNWNFLAVTHPGYMAFLTYDEVKARLQKYSTKPGSYIFRLSCTRLGQWAIGYVTADGNILQTIPHNKPLFQALIDGSREGFYLYPDGRSYNPDLTDLCEPTPHDHIKVTQEQYELYCEMGSTFQLCKICAENDKDVKIEPCGHLMCTSCLTSWQESDGQGCPFCRCEIKGTEPIVVDPFDPRDENRCCSFNDSLCTPMLDFDDDDLREECLIMNRLASLRKMNERQNSPVTSPGSSPLSQRRKTPPDPLQIPHLNLPPVPPRLDLIQKGLARSPCASPTGSPKSSPCMVRKQDKPLPAPPPPLREPPPPPERPPPIPPDSRTCRHLHHTENVPCRDQSTQHDAWCTRDISGASQPSICRVAHDGSPKLGVPSSSVLNGRHSRMSTEAGFIRHKHHKRRESPLETIRVYNGLSGNEEYDVPPRLSPPPPPPTITIHPAIKCPLLVNSVSDKVRNSAEEDDSEYKIPSSHPVSSRLPLHCHSIKHFPRLCENGQCLSNGTHNGISEIKKLKQPDQGDVIATSTVPVPLPSARTSARENHPHGSSLTRTPSDYDLLVPHPGEESFDSSPPSQPPPPPPARTCVPEHAMPTASGCRPNSDVDLFLPHSDPCPEAPLPPARRGPGEAKSNRLSQEYDQLPSCPDCPQAPARPPKPVPRRTAPEIHHRRHYNCDSLAENVDAKIAKLMGEGFPFEEVKRALEIAQNNVDVARSILREFAFPPPVCPRLHL.

Over residues 1-14 the composition is skewed to low complexity; it reads MASSSSSSSSTNSS. The interval 1–25 is disordered; that stretch reads MASSSSSSSSTNSSAVTGRLPGARS. The tract at residues 46–178 is 4H; the sequence is PPKQAAADRR…KAIFPSGQFQ (133 aa). The Cbl-PTB domain maps to 46-354; sequence PPKQAAADRR…GRSYNPDLTD (309 aa). The interval 179–251 is EF-hand-like; sequence GDNFRITKAD…FEFDIFTRLF (73 aa). Ca(2+)-binding residues include Asp232, Thr234, Asn236, Tyr238, and Glu243. Residues 252–354 are SH2-like; that stretch reads QPWTSILRNW…GRSYNPDLTD (103 aa). Arg297 contributes to the 4-O-phospho-L-tyrosine binding site. The linker stretch occupies residues 355–383; the sequence is LCEPTPHDHIKVTQEQYELYCEMGSTFQL. An RING-type zinc finger spans residues 384–423; sequence CKICAENDKDVKIEPCGHLMCTSCLTSWQESDGQGCPFCR. Disordered stretches follow at residues 480–582, 709–728, and 766–911; these read MNER…RTCR, VRNS…SHPV, and LKQP…PVPR. Residues 483–497 are compositionally biased toward polar residues; the sequence is RQNSPVTSPGSSPLS. A compositionally biased stretch (pro residues) spans 554-576; sequence LPAPPPPLREPPPPPERPPPIPP. Pro residues predominate over residues 825–834; the sequence is PSQPPPPPPA. The UBA domain maps to 927–970; the sequence is SLAENVDAKIAKLMGEGFPFEEVKRALEIAQNNVDVARSILREF.

As to quaternary structure, interacts with several SH3 domain-containing proteins and with poly-ubiquitinated proteins.

It localises to the cytoplasm. The enzyme catalyses S-ubiquitinyl-[E2 ubiquitin-conjugating enzyme]-L-cysteine + [acceptor protein]-L-lysine = [E2 ubiquitin-conjugating enzyme]-L-cysteine + N(6)-ubiquitinyl-[acceptor protein]-L-lysine.. The protein operates within protein modification; protein ubiquitination. Its function is as follows. E3 ubiquitin-protein ligase which accepts ubiquitin from specific E2 ubiquitin-conjugating enzymes, and transfers it to substrates, generally promoting their degradation by the proteasome. The polypeptide is E3 ubiquitin-protein ligase CBL-B (cblb) (Xenopus tropicalis (Western clawed frog)).